The primary structure comprises 741 residues: Mitofusin-1 (741 aa).

Topologically, residues 1–584 are cytoplasmic; sequence MAEPVSPLKH…ASQEELMITL (584 aa). Residues 9–73 form a part of a helix bundle domain, formed by helices from N-terminal and C-terminal regions region; the sequence is KHFVLAKKAI…LSIIGEVLSR (65 aa). The 250-residue stretch at 72 to 321 folds into the Dynamin-type G domain; sequence SRRHMKVAFF…ARLQEFQNFE (250 aa). The tract at residues 82-89 is G1 motif; sequence GRTSSGKS. 85–90 provides a ligand contact to GTP; that stretch reads SSGKSS. The segment at 108-109 is G2 motif; it reads IT. The segment at 178-181 is G3 motif; it reads DSPG. 237 to 240 contacts GTP; the sequence is NRWD. Residues 237–240 are G4 motif; that stretch reads NRWD. Position 266 (Glu266) is a region of interest, G5 motif. Residues Ser284 and Lys286 each contribute to the GTP site. Residues 338–364 form a part of a helix bundle domain, formed by helices from N-terminal and C-terminal regions region; it reads EQHTIRAKQILATVKNIMDSVNLAAED. Positions 371 to 408 form a coiled coil; it reads EEREDQIDRLDFIRNQMNLLTLDVKKKIKEVTEEVANK. A helical transmembrane segment spans residues 585–605; it reads VTGLASVTSRTSMGIIIVGGV. Residues 606 to 608 are Mitochondrial intermembrane-facing; it reads IWK. The chain crosses the membrane as a helical span at residues 609–629; it reads TIGWKLLSVSLTMYGALYLYE. The Cytoplasmic segment spans residues 630–741; it reads RLSWTTHAKE…QFLPSSNEES (112 aa). A coiled-coil region spans residues 679 to 734; it reads RLCQQVDITQKQLEEEIARLPKEIDQLEKIQNNSKLLRNKAVQLENELENFTKQFL. Residues 703–734 form a part of a helix bundle domain, formed by helices from N-terminal and C-terminal regions region; that stretch reads DQLEKIQNNSKLLRNKAVQLENELENFTKQFL.

It belongs to the TRAFAC class dynamin-like GTPase superfamily. Dynamin/Fzo/YdjA family. Mitofusin subfamily. Homodimer, also in the absence of bound GTP. Forms higher oligomers in the presence of a transition state GTP analog. Forms homomultimers and heteromultimers with MFN2. Oligomerization is essential for mitochondrion fusion. Component of a high molecular weight multiprotein complex. Interacts with VAT1. Interacts with THG1L; THG1L probably functions as a guanyl-nucleotide exchange factor/GEF, activating MFN1. Ubiquitinated by non-degradative ubiquitin by PRKN. Deubiquitination by USP30 inhibits mitochondrial fusion. Ubiquitinated by MARCHF5. When mitochondria are depolarized and dysfunctional, it is ubiquitinated by a SCF (SKP1-CUL1-F-box protein) E3 ubiquitin-protein ligase complex that contains FBXO7 and PRKN. As to expression, detected in kidney and heart (at protein level). Ubiquitous. Expressed at slightly higher level in kidney and heart. Isoform 2 may be overexpressed in some tumors, such as lung cancers.

Its subcellular location is the mitochondrion outer membrane. It localises to the cytoplasm. It carries out the reaction GTP + H2O = GDP + phosphate + H(+). Its function is as follows. Mitochondrial outer membrane GTPase that mediates mitochondrial clustering and fusion. Membrane clustering requires GTPase activity. It may involve a major rearrangement of the coiled coil domains. Mitochondria are highly dynamic organelles, and their morphology is determined by the equilibrium between mitochondrial fusion and fission events. Overexpression induces the formation of mitochondrial networks (in vitro). Has low GTPase activity. The chain is Mitofusin-1 (MFN1) from Homo sapiens (Human).